Here is a 245-residue protein sequence, read N- to C-terminus: Pathogenesis-related thaumatin-like protein 3.6 (245 aa).

Positions 1-19 (GSIPFWIALIASFSVFLQG) are cleaved as a signal peptide. 8 disulfides stabilise this stretch: C33-C226, C74-C84, C89-C95, C142-C215, C148-C198, C156-C166, C170-C179, and C180-C185. N-linked (GlcNAc...) asparagine glycosylation is present at N90. Residue N186 is glycosylated (N-linked (GlcNAc...) asparagine).

It belongs to the thaumatin family. In terms of tissue distribution, mostly expressed in strobili, and, to a lower extent, in roots of seedlings and saplings.

In terms of biological role, may be involved in disease resistance. The protein is Pathogenesis-related thaumatin-like protein 3.6 of Cryptomeria japonica (Japanese cedar).